An 84-amino-acid chain; its full sequence is Small ribosomal subunit protein bS18 (84 aa).

Belongs to the bacterial ribosomal protein bS18 family. Part of the 30S ribosomal subunit. Forms a tight heterodimer with protein bS6.

Binds as a heterodimer with protein bS6 to the central domain of the 16S rRNA, where it helps stabilize the platform of the 30S subunit. This Ruthia magnifica subsp. Calyptogena magnifica protein is Small ribosomal subunit protein bS18.